A 437-amino-acid polypeptide reads, in one-letter code: 3-phosphoshikimate 1-carboxyvinyltransferase (437 aa).

3-phosphoshikimate is bound by residues lysine 22, serine 23, and arginine 27. Lysine 22 is a phosphoenolpyruvate binding site. Glycine 94 and arginine 122 together coordinate phosphoenolpyruvate. Residues serine 167, glutamine 169, aspartate 314, and lysine 341 each contribute to the 3-phosphoshikimate site. A phosphoenolpyruvate-binding site is contributed by glutamine 169. Aspartate 314 (proton acceptor) is an active-site residue. 2 residues coordinate phosphoenolpyruvate: arginine 345 and arginine 389.

Belongs to the EPSP synthase family. In terms of assembly, monomer.

Its subcellular location is the cytoplasm. The enzyme catalyses 3-phosphoshikimate + phosphoenolpyruvate = 5-O-(1-carboxyvinyl)-3-phosphoshikimate + phosphate. It functions in the pathway metabolic intermediate biosynthesis; chorismate biosynthesis; chorismate from D-erythrose 4-phosphate and phosphoenolpyruvate: step 6/7. In terms of biological role, catalyzes the transfer of the enolpyruvyl moiety of phosphoenolpyruvate (PEP) to the 5-hydroxyl of shikimate-3-phosphate (S3P) to produce enolpyruvyl shikimate-3-phosphate and inorganic phosphate. In Oenococcus oeni (strain ATCC BAA-331 / PSU-1), this protein is 3-phosphoshikimate 1-carboxyvinyltransferase.